Here is a 396-residue protein sequence, read N- to C-terminus: Ribosomal RNA large subunit methyltransferase I (396 aa).

The PUA domain occupies 2 to 79; the sequence is SVRLVLAKGR…QAESIDIAFF (78 aa).

Belongs to the methyltransferase superfamily. RlmI family.

It is found in the cytoplasm. The catalysed reaction is cytidine(1962) in 23S rRNA + S-adenosyl-L-methionine = 5-methylcytidine(1962) in 23S rRNA + S-adenosyl-L-homocysteine + H(+). In terms of biological role, specifically methylates the cytosine at position 1962 (m5C1962) of 23S rRNA. The chain is Ribosomal RNA large subunit methyltransferase I from Citrobacter koseri (strain ATCC BAA-895 / CDC 4225-83 / SGSC4696).